The chain runs to 629 residues: Phosphomethylpyrimidine synthase (629 aa).

Substrate contacts are provided by residues asparagine 215, methionine 244, tyrosine 273, histidine 309, 329-331 (SRG), 370-373 (DGLR), and glutamate 409. Histidine 413 provides a ligand contact to Zn(2+). Residue tyrosine 436 participates in substrate binding. Histidine 477 contacts Zn(2+). Cysteine 557, cysteine 560, and cysteine 565 together coordinate [4Fe-4S] cluster. Positions 589–610 (ENIKRETSAEEAEEAREGMSDM) are disordered.

This sequence belongs to the ThiC family. Homodimer. [4Fe-4S] cluster serves as cofactor.

The catalysed reaction is 5-amino-1-(5-phospho-beta-D-ribosyl)imidazole + S-adenosyl-L-methionine = 4-amino-2-methyl-5-(phosphooxymethyl)pyrimidine + CO + 5'-deoxyadenosine + formate + L-methionine + 3 H(+). The protein operates within cofactor biosynthesis; thiamine diphosphate biosynthesis. Functionally, catalyzes the synthesis of the hydroxymethylpyrimidine phosphate (HMP-P) moiety of thiamine from aminoimidazole ribotide (AIR) in a radical S-adenosyl-L-methionine (SAM)-dependent reaction. In Erythrobacter litoralis (strain HTCC2594), this protein is Phosphomethylpyrimidine synthase.